The chain runs to 335 residues: DNA-directed RNA polymerase subunit alpha (335 aa).

The segment at Met-1–Glu-233 is alpha N-terminal domain (alpha-NTD). The interval Lys-265–Lys-335 is alpha C-terminal domain (alpha-CTD).

The protein belongs to the RNA polymerase alpha chain family. In plastids the minimal PEP RNA polymerase catalytic core is composed of four subunits: alpha, beta, beta', and beta''. When a (nuclear-encoded) sigma factor is associated with the core the holoenzyme is formed, which can initiate transcription.

It localises to the plastid. The protein resides in the chloroplast. The catalysed reaction is RNA(n) + a ribonucleoside 5'-triphosphate = RNA(n+1) + diphosphate. Functionally, DNA-dependent RNA polymerase catalyzes the transcription of DNA into RNA using the four ribonucleoside triphosphates as substrates. This is DNA-directed RNA polymerase subunit alpha from Coffea arabica (Arabian coffee).